Consider the following 428-residue polypeptide: Adenylosuccinate synthetase (428 aa).

GTP contacts are provided by residues 12-18 (GDEGKGK) and 40-42 (GHT). The active-site Proton acceptor is D13. Positions 13 and 40 each coordinate Mg(2+). Residues 13-16 (DEGK), 38-41 (NAGH), T130, R144, Q225, T240, and R304 contribute to the IMP site. H41 acts as the Proton donor in catalysis. 300–306 (TTTGRPR) serves as a coordination point for substrate. GTP-binding positions include R306, 332 to 334 (KLD), and 414 to 416 (SVG).

Belongs to the adenylosuccinate synthetase family. In terms of assembly, homodimer. Mg(2+) is required as a cofactor.

The protein localises to the cytoplasm. It catalyses the reaction IMP + L-aspartate + GTP = N(6)-(1,2-dicarboxyethyl)-AMP + GDP + phosphate + 2 H(+). Its pathway is purine metabolism; AMP biosynthesis via de novo pathway; AMP from IMP: step 1/2. In terms of biological role, plays an important role in the de novo pathway of purine nucleotide biosynthesis. Catalyzes the first committed step in the biosynthesis of AMP from IMP. The protein is Adenylosuccinate synthetase of Caldanaerobacter subterraneus subsp. tengcongensis (strain DSM 15242 / JCM 11007 / NBRC 100824 / MB4) (Thermoanaerobacter tengcongensis).